The sequence spans 438 residues: Flagellum-specific ATP synthase (438 aa).

A disordered region spans residues 119-139 (GLSPVSTEQSPPNPMKRPPIR). 165-172 (AGSGVGKS) serves as a coordination point for ATP.

It belongs to the ATPase alpha/beta chains family.

It is found in the cytoplasm. It carries out the reaction ATP + H2O + 4 H(+)(in) = ADP + phosphate + 5 H(+)(out). In terms of biological role, probable catalytic subunit of a protein translocase for flagellum-specific export, or a proton translocase involved in local circuits at the flagellum. This chain is Flagellum-specific ATP synthase (fliI), found in Bacillus subtilis (strain 168).